The chain runs to 67 residues: Mitotic-spindle organizing protein 1A (67 aa).

This sequence belongs to the MOZART1 family. In terms of assembly, part of the gamma-tubulin complex. Interacts with GIP1 and GCP3. Mostly expressed in siliques and flowers, and, to a lower extent, in leaves, roots and seedlings, with highest levels in young tissues, meristematic cells, and the vasculature.

The protein localises to the cytoplasm. It is found in the cytoskeleton. The protein resides in the microtubule organizing center. Its subcellular location is the spindle. It localises to the nucleus. The protein localises to the phragmoplast. It is found in the nucleus envelope. Its function is as follows. Required for gamma-tubulin complex recruitment to the microtubule organizing centers (MTOCs). During mitosis, modulates gamma-tubulin complex localization, spindle stability and chromosomal segregation. Necessary for gametophyte development and embryogenesis. This chain is Mitotic-spindle organizing protein 1A (GIP2), found in Arabidopsis thaliana (Mouse-ear cress).